A 400-amino-acid polypeptide reads, in one-letter code: Phosphoglycerate kinase (400 aa).

Substrate-binding positions include 24–26 (DFN), Arg39, 62–65 (HLGK), Arg123, and Arg156. Residues Lys207, Gly298, Glu329, and 356 to 359 (GGDS) contribute to the ATP site.

It belongs to the phosphoglycerate kinase family. As to quaternary structure, monomer.

It localises to the cytoplasm. It carries out the reaction (2R)-3-phosphoglycerate + ATP = (2R)-3-phospho-glyceroyl phosphate + ADP. It participates in carbohydrate degradation; glycolysis; pyruvate from D-glyceraldehyde 3-phosphate: step 2/5. The sequence is that of Phosphoglycerate kinase from Clostridioides difficile (strain 630) (Peptoclostridium difficile).